The following is a 158-amino-acid chain: UPF0178 protein RPA2191 (158 aa).

Belongs to the UPF0178 family.

The chain is UPF0178 protein RPA2191 from Rhodopseudomonas palustris (strain ATCC BAA-98 / CGA009).